We begin with the raw amino-acid sequence, 304 residues long: Glutaminase (304 aa).

Residues Ser63, Asn114, Glu158, Asn165, Tyr189, Tyr240, and Val258 each coordinate substrate.

It belongs to the glutaminase family. Homotetramer.

It catalyses the reaction L-glutamine + H2O = L-glutamate + NH4(+). The chain is Glutaminase from Shewanella baltica (strain OS155 / ATCC BAA-1091).